The sequence spans 133 residues: Small ribosomal subunit protein uS8 (133 aa).

The protein belongs to the universal ribosomal protein uS8 family. As to quaternary structure, part of the 30S ribosomal subunit. Contacts proteins S5 and S12.

One of the primary rRNA binding proteins, it binds directly to 16S rRNA central domain where it helps coordinate assembly of the platform of the 30S subunit. This Rhodopirellula baltica (strain DSM 10527 / NCIMB 13988 / SH1) protein is Small ribosomal subunit protein uS8.